We begin with the raw amino-acid sequence, 508 residues long: Photosystem II CP47 reaction center protein (508 aa).

A run of 6 helical transmembrane segments spans residues 21 to 36 (AVHIMHTALVAGWAGS), 101 to 115 (ILFSGLCFLAAIWHW), 140 to 156 (GIHLFLSGLACFGFGAF), 203 to 218 (IAAGTLGILAGLFHLS), 237 to 252 (VLSSSIAAVFFAAFVV), and 457 to 472 (SFALLFFFGHIWHGAR).

Belongs to the PsbB/PsbC family. PsbB subfamily. As to quaternary structure, PSII is composed of 1 copy each of membrane proteins PsbA, PsbB, PsbC, PsbD, PsbE, PsbF, PsbH, PsbI, PsbJ, PsbK, PsbL, PsbM, PsbT, PsbX, PsbY, PsbZ, Psb30/Ycf12, at least 3 peripheral proteins of the oxygen-evolving complex and a large number of cofactors. It forms dimeric complexes. Binds multiple chlorophylls. PSII binds additional chlorophylls, carotenoids and specific lipids. is required as a cofactor.

The protein localises to the plastid. It is found in the chloroplast thylakoid membrane. One of the components of the core complex of photosystem II (PSII). It binds chlorophyll and helps catalyze the primary light-induced photochemical processes of PSII. PSII is a light-driven water:plastoquinone oxidoreductase, using light energy to abstract electrons from H(2)O, generating O(2) and a proton gradient subsequently used for ATP formation. This is Photosystem II CP47 reaction center protein from Oenothera argillicola (Appalachian evening primrose).